A 252-amino-acid polypeptide reads, in one-letter code: 3-deoxy-manno-octulosonate cytidylyltransferase 2 (252 aa).

It belongs to the KdsB family.

The protein localises to the cytoplasm. The enzyme catalyses 3-deoxy-alpha-D-manno-oct-2-ulosonate + CTP = CMP-3-deoxy-beta-D-manno-octulosonate + diphosphate. Its pathway is nucleotide-sugar biosynthesis; CMP-3-deoxy-D-manno-octulosonate biosynthesis; CMP-3-deoxy-D-manno-octulosonate from 3-deoxy-D-manno-octulosonate and CTP: step 1/1. It participates in bacterial outer membrane biogenesis; lipopolysaccharide biosynthesis. In terms of biological role, activates KDO (a required 8-carbon sugar) for incorporation into bacterial lipopolysaccharide in Gram-negative bacteria. In Actinobacillus pleuropneumoniae serotype 5b (strain L20), this protein is 3-deoxy-manno-octulosonate cytidylyltransferase 2.